The primary structure comprises 153 residues: UPF0178 protein MXAN_5526 (153 aa).

Belongs to the UPF0178 family.

In Myxococcus xanthus (strain DK1622), this protein is UPF0178 protein MXAN_5526.